Reading from the N-terminus, the 263-residue chain is Bradykinin-potentiating and C-type natriuretic peptides (263 aa).

An N-terminal signal peptide occupies residues 1–23 (MFVSRLAASGLLLLALMALSLDG). The propeptide occupies 24 to 30 (KPVQQWS). Gln31 is subject to Pyrrolidone carboxylic acid. Residues 42-48 (LVVQQWS) constitute a propeptide that is removed on maturation. Gln49 bears the Pyrrolidone carboxylic acid mark. The propeptide occupies 60-66 (LVVQQWS). Gln67 bears the Pyrrolidone carboxylic acid mark. Residues 78-84 (LVVQQWS) constitute a propeptide that is removed on maturation. Gln85 bears the Pyrrolidone carboxylic acid mark. Residues 89–95 (PRPKIPP) are angiotensin-converting enzyme active site binding. The propeptide occupies 96-102 (LVVQQWS). Gln103 carries the post-translational modification Pyrrolidone carboxylic acid. The angiotensin-converting enzyme active site binding stretch occupies residues 107-113 (PRPKIPP). Residues 114-116 (LVV) constitute a propeptide that is removed on maturation. Residue Gln117 is modified to Pyrrolidone carboxylic acid. Positions 128–130 (LLL) are excised as a propeptide. Residue Gln131 is modified to Pyrrolidone carboxylic acid. Positions 137–241 (AGGTTALREE…ARRLKGLVKK (105 aa)) are excised as a propeptide. Disordered stretches follow at residues 152–171 (EAAS…GSKA) and 177–205 (RLSK…GKQA). A compositionally biased stretch (low complexity) spans 181 to 192 (SKGASATSASAS). The segment covering 194 to 204 (PMRDLRTDGKQ) has biased composition (basic and acidic residues). Cys247 and Cys263 are oxidised to a cystine.

In the N-terminal section; belongs to the bradykinin-potentiating peptide family. It in the C-terminal section; belongs to the natriuretic peptide family. As to expression, expressed by the venom gland.

Its subcellular location is the secreted. In terms of biological role, inhibits the rabbit lung angiotensin-converting enzyme (ACE) (IC(50)=15 uM). Contracts the rat gastric fundus smooth muscle in a rapid and transient manner. Functionally, causes no contraction of the rat gastric fundus smooth muscle even at high concentrations. Causes very weak contraction of the isolated guinea pig ileum. Causes weak contraction on rat uterus. Its function is as follows. Inhibits the activity of the angiotensin-converting enzyme (ACE) by a preferential interaction with its C-domain (Ki=30 nM, IC(50)=1.1 uM). It binds ACE in a zinc-independent manner. Also potentiates the hypotensive effects of bradykinin. Causes high contraction of the isolated guinea pig ileum and weak contraction on rat uterus. Inhibits the activity of the angiotensin-converting enzyme (ACE) by interacting with the same potency to its C- and N-domains. Inhibits the rabbit lung angiotensin-converting enzyme (ACE) (IC(50)=7.1 uM). Causes weak contraction of the isolated guinea pig ileum. Causes weak contraction on rat uterus. In terms of biological role, inhibits the rabbit lung angiotensin-converting enzyme (ACE) (IC(50)=46 uM). Synthetic Leu3-blomhotin contracts the rat gastric fundus smooth muscle in a rapid and transient manner. Causes moderate contraction of the isolated guinea pig ileum. Causes weak contraction on rat uterus. Functionally, causes weak contraction of the isolated guinea pig ileum. Causes about 50-fold more potentiating activity on rat uterus than on guinea pig ileum. Its function is as follows. Synthetic peptide potentiates the bradykinin in vivo. Synthetic peptide does not show any bradykinin-potentiating effects. In terms of biological role, has a vasorelaxant activity in rat aortic strips and a diuretic potency in anesthetized rats. May act by activating natriuretic receptors (NPR1 and/or NPR2). The protein is Bradykinin-potentiating and C-type natriuretic peptides of Gloydius blomhoffii (Mamushi).